Reading from the N-terminus, the 564-residue chain is CTP synthase (564 aa).

Positions 1–272 are amidoligase domain; sequence MARPKNVKHI…DIRVLKKLGL (272 aa). Position 18 (serine 18) interacts with CTP. Serine 18 provides a ligand contact to UTP. Residue 19-24 participates in ATP binding; that stretch reads SLGKGI. Tyrosine 59 is a binding site for L-glutamine. Aspartate 76 contacts ATP. Mg(2+) is bound by residues aspartate 76 and glutamate 146. Residues 153–155, 193–198, and lysine 229 each bind CTP; these read DIE and KTKPTQ. UTP is bound by residues 193–198 and lysine 229; that span reads KTKPTQ. In terms of domain architecture, Glutamine amidotransferase type-1 spans 299–543; it reads TIAICGKYTE…VAAAKEFAHG (245 aa). An L-glutamine-binding site is contributed by glycine 363. Catalysis depends on cysteine 390, which acts as the Nucleophile; for glutamine hydrolysis. Residues 391–394, glutamate 414, and arginine 471 each bind L-glutamine; that span reads LGMQ. Residues histidine 516 and glutamate 518 contribute to the active site.

It belongs to the CTP synthase family. In terms of assembly, homotetramer.

The enzyme catalyses UTP + L-glutamine + ATP + H2O = CTP + L-glutamate + ADP + phosphate + 2 H(+). It carries out the reaction L-glutamine + H2O = L-glutamate + NH4(+). The catalysed reaction is UTP + NH4(+) + ATP = CTP + ADP + phosphate + 2 H(+). It functions in the pathway pyrimidine metabolism; CTP biosynthesis via de novo pathway; CTP from UDP: step 2/2. With respect to regulation, allosterically activated by GTP, when glutamine is the substrate; GTP has no effect on the reaction when ammonia is the substrate. The allosteric effector GTP functions by stabilizing the protein conformation that binds the tetrahedral intermediate(s) formed during glutamine hydrolysis. Inhibited by the product CTP, via allosteric rather than competitive inhibition. Catalyzes the ATP-dependent amination of UTP to CTP with either L-glutamine or ammonia as the source of nitrogen. Regulates intracellular CTP levels through interactions with the four ribonucleotide triphosphates. In Prosthecochloris aestuarii (strain DSM 271 / SK 413), this protein is CTP synthase.